The chain runs to 1645 residues: MAQKPNFLKKIISAGLVTASTATIVAGFSGVAMGAVMQYNRTTNAAATTVDGAGFDQTGAGVNLPVATNSVITANSNNAITFNTPNGNLNSLFLDTANTLAVTINENTTLGFVTNVTKQGNFFNFTIGAGKSLTITGHGITAQQAATTKSAQNVVSKVNAGAAINDNDLSGVGSIDFTAAPSVLEFNLINPTTQEAPLTLGDNAKIVNGANGILNITNGFVKVSDKTFAGIKTINIGDNQGLMFNTTPDAANALNLQGGGNTINFNGRDGTGKLVLVSKNGNATEFNVTGSLGGNLKGVIEFDTTAAAGKLIANGGAANAVIGTDNGAGRAAGFIVSVDNGNAATISGQVYAKDIVIQSANAGGQVTFEHLVDVGLGGKTNFKTADSKVIITENASFGSTDFGNLAVQIVVPNNKILTGNFIGDAKNNGNTAGVITFNANGTLVSGNTDPNIVVTNIKAIEVEGAGIVQLSGIHGAELRLGNAGSIFKLADGTVINGPVNQNPLVNNNALAAGSIQLDGSAIITGDIGNGAVNAALQDITLANDASKILTLSGANIIGANAGGAIHFQANGGTIQLTSTQNNILVDFDLDVTTDQTGVVDASSLTNNQTLTINGSIGTIGANTKTLGRFNVGSSKTILNAGDVAINELVMENDGSVHLTHNTYLITKTINAANQGKIIVAADPINTDTALADGTNLGSAESPLSNIHFATKAANGDSILHIGKGVNLYANNITTTDANVGSLHFRSGGTSIVSGTVGGQQGLKLNNLILDNGTTVKFLGDITFNGGTKIEGKSILQISSNYITDHIESADNTGTLEFVNTDPITVTLNKQGAYFGVLKQVMVSGPGNIAFNEIGNGVAHAIAVDSISFENASLGASLFLLSGTPLDVLTIKSTVGNGTVDNFNAPILVVSGIDSMINNGQVIGDQKNIIALSLGSDNSITVNSNTLYAGIRTTKTNQGTVTLSGGIPNNPGTIYGLGLENGDPKLKQVTFTTDYNNLGSIIATNVTINDDVTLTTGGIAGTDFDGKITLGSINGNANVKFVDRTFSHPTSMIVSTKANQGTVTYLGNALVGNIGSSDIPVASVRFTGNDSGVGLQGNIHSQNIDFGTYNLTILNSDVILGGGTTAINGEIDLLTNNLIFANGTSTWGNNTSLSTTLNVSNGNVGQIVIAEGAQVNATTTGTTTIKIQDNANANFSGTQTYTLIQGGARFNGTLGAPNFDVTGNNIFVKYELIRDANQDYVLTRTNDVLNVVTTAVGNSAIANAPGVHQNIAICLESTDTAAYNNMLLAKDSSDVATFIGAIATDTGAAVATVNLNDTQKTQDLLGNRLGALRYLSNSETADVGGSETGAVSSGDEAIDQVSYGVWAKPFYNIAEQDKKGGLAGYKAKTAGVVVGLDTLANDNLMIGAAIGITKTDIKHQDYKKGDKTDIKGLSFSLYGAQQLVKNFFAQGSAIFTLNKVKSKSQRYFFDANGKMNKQIAAGNYDNITFGGNLMFGYDYNALQGVLVTPMAGLSYLKSSNENYKETGTTVANKRIHSKFSDRIDLIVGAKVTGSAMNINDIVIYPEIHSFVVHKVNGKLSKAQSMLDGQTAPFISQPDRTAKTSYNIGLSANIRSDAKMEYGIGYDFNAASKYTAHQGTLKVRINF.

A propeptide spanning residues 1329–1352 (GALRYLSNSETADVGGSETGAVSS) is cleaved from the precursor. Positions 1357-1645 (IDQVSYGVWA…QGTLKVRINF (289 aa)) constitute an Autotransporter domain.

It belongs to the rickettsiae OmpA/OmpB family.

Its subcellular location is the periplasm. It localises to the secreted. The protein localises to the cell surface. It is found in the cell outer membrane. Functionally, the 120 kDa surface-exposed protein is a major structural protein which may play a role as a rickettsial virulence factor and/or immunogen during infection. The 32 kDa beta peptide may serve as a membrane anchor. This chain is Outer membrane protein B (ompB), found in Rickettsia typhi (strain ATCC VR-144 / Wilmington).